We begin with the raw amino-acid sequence, 122 residues long: Large ribosomal subunit protein uL14 (122 aa).

This sequence belongs to the universal ribosomal protein uL14 family. In terms of assembly, part of the 50S ribosomal subunit. Forms a cluster with proteins L3 and L19. In the 70S ribosome, L14 and L19 interact and together make contacts with the 16S rRNA in bridges B5 and B8.

In terms of biological role, binds to 23S rRNA. Forms part of two intersubunit bridges in the 70S ribosome. This Solibacter usitatus (strain Ellin6076) protein is Large ribosomal subunit protein uL14.